Here is a 93-residue protein sequence, read N- to C-terminus: MHQSLLCFGARRLPMTTKLGHQYYKGTRTGKMGQKTRHGGFLVQWSRVRTFVPPSGDCELLPFVSRRIQATKGTYPEGANGLDGAVYFDLAHS.

Residues 1–13 constitute a mitochondrion transit peptide; the sequence is MHQSLLCFGARRL.

The protein belongs to the mitochondrion-specific ribosomal protein mL41 family. In terms of assembly, component of the mitochondrial large ribosomal subunit (mt-LSU). Mature yeast 74S mitochondrial ribosomes consist of a small (37S) and a large (54S) subunit. The 37S small subunit contains a 15S ribosomal RNA (15S mt-rRNA) and at least 32 different proteins. The 54S large subunit contains a 21S rRNA (21S mt-rRNA) and at least 45 different proteins.

The protein resides in the mitochondrion. Component of the mitochondrial ribosome (mitoribosome), a dedicated translation machinery responsible for the synthesis of mitochondrial genome-encoded proteins, including at least some of the essential transmembrane subunits of the mitochondrial respiratory chain. The mitoribosomes are attached to the mitochondrial inner membrane and translation products are cotranslationally integrated into the membrane. This is Large ribosomal subunit protein mL41 (mrpl27) from Schizosaccharomyces pombe (strain 972 / ATCC 24843) (Fission yeast).